A 431-amino-acid polypeptide reads, in one-letter code: tRNA-specific 2-thiouridylase MnmA (431 aa).

ATP-binding positions include 35 to 42 (AMSGGVDS) and L61. C129 functions as the Nucleophile in the catalytic mechanism. The cysteines at positions 129 and 226 are disulfide-linked. An ATP-binding site is contributed by G153. An interaction with tRNA region spans residues 176–178 (RDQ). C226 serves as the catalytic Cysteine persulfide intermediate. Residues 407-431 (PKPPNEDLLDTNESSDLVSPKRSAC) form a disordered region.

It belongs to the MnmA/TRMU family.

It is found in the cytoplasm. It carries out the reaction S-sulfanyl-L-cysteinyl-[protein] + uridine(34) in tRNA + AH2 + ATP = 2-thiouridine(34) in tRNA + L-cysteinyl-[protein] + A + AMP + diphosphate + H(+). Functionally, catalyzes the 2-thiolation of uridine at the wobble position (U34) of tRNA, leading to the formation of s(2)U34. This Beijerinckia indica subsp. indica (strain ATCC 9039 / DSM 1715 / NCIMB 8712) protein is tRNA-specific 2-thiouridylase MnmA.